Consider the following 297-residue polypeptide: Thiosulfate sulfurtransferase (297 aa).

The residue at position 14 (K14) is an N6-acetyllysine; alternate. N6-succinyllysine; alternate is present on K14. The region spanning 25–143 (LGPGLRVLDA…WLKEGHPVTS (119 aa)) is the Rhodanese 1 domain. O-linked (GlcNAc) serine glycosylation is present at S35. A Phosphoserine modification is found at S38. N6-acetyllysine; alternate is present on K136. N6-succinyllysine; alternate is present on K136. The hinge stretch occupies residues 144–159 (EPSRPEPAVFKATLDR). K163 carries the post-translational modification N6-acetyllysine. The Rhodanese 2 domain maps to 173-288 (QSKRFQLVDS…WFHQAPPETR (116 aa)). K175 is subject to N6-acetyllysine; alternate. Residue K175 is modified to N6-succinyllysine; alternate. R187 contributes to the substrate binding site. K224 is modified (N6-acetyllysine; alternate). K224 bears the N6-succinyllysine; alternate mark. K236 carries the post-translational modification N6-acetyllysine. K237 carries the post-translational modification N6-acetyllysine; alternate. K237 carries the post-translational modification N6-succinyllysine; alternate. The Cysteine persulfide intermediate role is filled by C248. K250 is a substrate binding site.

In terms of assembly, monomer.

The protein localises to the mitochondrion matrix. It carries out the reaction thiosulfate + hydrogen cyanide = thiocyanate + sulfite + 2 H(+). In terms of biological role, together with MRPL18, acts as a mitochondrial import factor for the cytosolic 5S rRNA. Only the nascent unfolded cytoplasmic form is able to bind to the 5S rRNA. Formation of iron-sulfur complexes and cyanide detoxification. Binds molecular oxygen and sulfur. The chain is Thiosulfate sulfurtransferase (TST) from Cricetulus griseus (Chinese hamster).